Here is a 346-residue protein sequence, read N- to C-terminus: Galactitol 1-phosphate 5-dehydrogenase (346 aa).

Residues Cys38, His59, Cys89, Cys92, Cys95, Cys103, and Glu144 each coordinate Zn(2+).

It belongs to the zinc-containing alcohol dehydrogenase family. Zn(2+) is required as a cofactor.

The catalysed reaction is galactitol 1-phosphate + NAD(+) = keto-D-tagatose 6-phosphate + NADH + H(+). In terms of biological role, converts galactitol 1-phosphate to tagatose 6-phosphate. This chain is Galactitol 1-phosphate 5-dehydrogenase (gatD), found in Escherichia coli O157:H7.